The following is a 142-amino-acid chain: Large ribosomal subunit protein uL13 (142 aa).

Belongs to the universal ribosomal protein uL13 family. As to quaternary structure, part of the 50S ribosomal subunit.

Its function is as follows. This protein is one of the early assembly proteins of the 50S ribosomal subunit, although it is not seen to bind rRNA by itself. It is important during the early stages of 50S assembly. The polypeptide is Large ribosomal subunit protein uL13 (Opitutus terrae (strain DSM 11246 / JCM 15787 / PB90-1)).